The sequence spans 464 residues: Protein FAM90A1 (464 aa).

Disordered regions lie at residues 1-43 (MMAR…PRLK), 71-294 (PNFG…KRSA), 312-386 (PFQI…AASH), 412-437 (PSFHSPEKPGAFLAQSPHVSEKSEGP), and 445-464 (VLYEDLQVPSSSEDSDSDLE). 2 stretches are compositionally biased toward basic and acidic residues: residues 74–83 (GEKEGKENLK) and 97–114 (NKDKGEKEERPRPQDPQR). A compositionally biased stretch (low complexity) spans 180–197 (LASLSPLRKASLSSSSSL). Over residues 344 to 355 (TSPQTGTRTPAQ) the composition is skewed to polar residues.

Belongs to the FAM90 family.

This is Protein FAM90A1 (FAM90A1) from Homo sapiens (Human).